Consider the following 180-residue polypeptide: Large ribosomal subunit protein uL6 (180 aa).

The protein belongs to the universal ribosomal protein uL6 family. Part of the 50S ribosomal subunit.

In terms of biological role, this protein binds to the 23S rRNA, and is important in its secondary structure. It is located near the subunit interface in the base of the L7/L12 stalk, and near the tRNA binding site of the peptidyltransferase center. The polypeptide is Large ribosomal subunit protein uL6 (Thermodesulfovibrio yellowstonii (strain ATCC 51303 / DSM 11347 / YP87)).